The following is a 565-amino-acid chain: Atlastin-2 (565 aa).

Topologically, residues 1 to 458 (MVLKKGVKFF…NIFYAARTPA (458 aa)) are cytoplasmic. Residues 73 to 318 (DLNIVVVSVA…LVPLLLAPEN (246 aa)) form the GB1/RHD3-type G domain. Positions 86, 87, 88, 89, 90, 91, 157, 226, and 227 each coordinate GDP. The GTP site is built by arginine 86, lysine 87, glycine 88, lysine 89, serine 90, and phenylalanine 91. Position 90 (serine 90) interacts with Mg(2+). Positions 226 and 227 each coordinate GTP. Residues 238–266 (LEGGKQFLEKRLQVKKNQHEELQNVRKHI) are a coiled coil. At lysine 252 the chain carries N6-methyllysine. Residues valine 285 and asparagine 288 each contribute to the GDP site. A GTP-binding site is contributed by valine 285. Positions 356 to 447 (MLQATAEANN…YANFIKHNDG (92 aa)) are 3HB (three-helix bundle) domain. Residues 448-456 (KNIFYAART) form a linker region. The chain crosses the membrane as a helical span at residues 459-479 (TLFAVMFAMYIISGLTGFIGL). The Lumenal portion of the chain corresponds to 480–481 (NS). A helical transmembrane segment spans residues 482–502 (IAVLCNLVMGLALTFLCTWAY). At 503–565 (VKYSGEFREI…VSHHARLKTD (63 aa)) the chain is on the cytoplasmic side. Positions 529-565 (KPLGDNLMEENIRQSVTNSIKAGLTDQVSHHARLKTD) are autoinhibitory domain.

This sequence belongs to the TRAFAC class dynamin-like GTPase superfamily. GB1/RHD3 GTPase family. GB1 subfamily. Monomeric and homodimeric. The homodimer, transiently formed by two molecules on opposing membranes, is the active form mediating ER membrane fusion. Interacts with REEP5 and RTN3; these proteins are involved in endoplasmic reticulum tubular network organization. Interacts with ZFYVE27; both proteins are involved in endoplasmic reticulum tubular network organization.

The protein localises to the endoplasmic reticulum membrane. It catalyses the reaction GTP + H2O = GDP + phosphate + H(+). Its function is as follows. Atlastin-2 (ATL2) is a membrane-anchored GTPase that mediates the GTP-dependent fusion of endoplasmic reticulum (ER) membranes, maintaining the continuous ER network. It facilitates the formation of three-way junctions where ER tubules intersect. Two atlastin-2 on neighboring ER tubules bind GTP and form loose homodimers through the GB1/RHD3-type G domains and 3HB regions. Upon GTP hydrolysis, the 3HB regions tighten, pulling the membranes together to drive their fusion. After fusion, the homodimer disassembles upon release of inorganic phosphate (Pi). Subsequently, GDP dissociates, resetting the monomers to a conformation ready for a new fusion cycle. This chain is Atlastin-2, found in Macaca fascicularis (Crab-eating macaque).